Here is a 488-residue protein sequence, read N- to C-terminus: Ribulose bisphosphate carboxylase large chain (488 aa).

Substrate is bound by residues Asn-127 and Thr-177. Catalysis depends on Lys-179, which acts as the Proton acceptor. Lys-181 serves as a coordination point for substrate. The Mg(2+) site is built by Lys-205, Asp-207, and Glu-208. Lys-205 is subject to N6-carboxylysine. The Proton acceptor role is filled by His-297. Substrate contacts are provided by Arg-298, His-330, and Ser-382.

Belongs to the RuBisCO large chain family. Type I subfamily. Heterohexadecamer of 8 large chains and 8 small chains. The cofactor is Mg(2+).

It is found in the plastid. Its subcellular location is the chloroplast. The catalysed reaction is 2 (2R)-3-phosphoglycerate + 2 H(+) = D-ribulose 1,5-bisphosphate + CO2 + H2O. The enzyme catalyses D-ribulose 1,5-bisphosphate + O2 = 2-phosphoglycolate + (2R)-3-phosphoglycerate + 2 H(+). In terms of biological role, ruBisCO catalyzes two reactions: the carboxylation of D-ribulose 1,5-bisphosphate, the primary event in carbon dioxide fixation, as well as the oxidative fragmentation of the pentose substrate in the photorespiration process. Both reactions occur simultaneously and in competition at the same active site. The protein is Ribulose bisphosphate carboxylase large chain of Porphyra purpurea (Red seaweed).